Reading from the N-terminus, the 308-residue chain is HTH-type transcriptional regulator YtlI (308 aa).

The HTH lysR-type domain occupies 1–57; that stretch reads MELRSIKTFHTIVKFGSFYKAAEILNYSQPTISMRMKQLEQDLGVLLFERGKSLQLT. Residues 18 to 37 constitute a DNA-binding region (H-T-H motif); the sequence is FYKAAEILNYSQPTISMRMK.

It belongs to the LysR transcriptional regulatory family.

Its function is as follows. Positively regulates the expression of ytmI operon in response to the availability of sulfur sources. The polypeptide is HTH-type transcriptional regulator YtlI (ytlI) (Bacillus subtilis (strain 168)).